We begin with the raw amino-acid sequence, 1458 residues long: ATPase family AAA domain-containing protein 2B (1458 aa).

The segment at 1–155 is disordered; the sequence is MVNTRKSSLR…LRGEKKGDGD (155 aa). Ser-16 bears the Phosphoserine mark. Gly residues predominate over residues 23 to 33; the sequence is PGAGAEPGATG. Over residues 34 to 58 the composition is skewed to low complexity; sequence GSSHFISSRTRSSKTRAASCPAAKA. Phosphoserine is present on residues Ser-79, Ser-81, and Ser-86. Over residues 99–115 the composition is skewed to basic and acidic residues; it reads VCKDKSKSRSTGQREEW. Polar residues predominate over residues 116 to 129; sequence NLSTGQARLTSQPG. Ser-140 carries the phosphoserine modification. Phosphothreonine is present on Thr-221. The segment at 244–286 is disordered; the sequence is NSYGIQNHHEVSTEGEEEESQEEDGDIEVEEAEGEENDRPYNL. Residues 256–279 show a composition bias toward acidic residues; sequence TEGEEEESQEEDGDIEVEEAEGEE. Ser-318 bears the Phosphoserine mark. Basic residues predominate over residues 321 to 332; the sequence is RRSHIRRKKHAI. Residues 321–353 form a disordered region; sequence RRSHIRRKKHAIHSSDTTSSDEERFERRKSKSM. Residue 441 to 448 coordinates ATP; the sequence is GPPGTGKT. Position 939 is a phosphoserine (Ser-939). Residues 943–974 are a coiled coil; it reads QLSESEKSRMEDQEENTLRELRLFLRDVTKRL. Positions 951-1066 constitute a Bromo domain; the sequence is RMEDQEENTL…DTAHAIIAAE (116 aa). 3 disordered regions span residues 1189 to 1208, 1217 to 1257, and 1309 to 1330; these read DCHEENGEETGDLSMTNDES, QGQR…EQTS, and LLEDQSKEKPETSTENHGDDLE. A compositionally biased stretch (low complexity) spans 1240–1252; it reads NESLLVNSSSSLN. 2 positions are modified to phosphoserine: Ser-1338 and Ser-1347.

This sequence belongs to the AAA ATPase family. As to quaternary structure, binds acetylated lysine residues in histone H1.4, H2A, H2B, H3 and H4 (in vitro).

Its subcellular location is the nucleus. The protein is ATPase family AAA domain-containing protein 2B (ATAD2B) of Homo sapiens (Human).